The sequence spans 229 residues: 2-C-methyl-D-erythritol 4-phosphate cytidylyltransferase (229 aa).

It belongs to the IspD/TarI cytidylyltransferase family. IspD subfamily.

The catalysed reaction is 2-C-methyl-D-erythritol 4-phosphate + CTP + H(+) = 4-CDP-2-C-methyl-D-erythritol + diphosphate. Its pathway is isoprenoid biosynthesis; isopentenyl diphosphate biosynthesis via DXP pathway; isopentenyl diphosphate from 1-deoxy-D-xylulose 5-phosphate: step 2/6. Its function is as follows. Catalyzes the formation of 4-diphosphocytidyl-2-C-methyl-D-erythritol from CTP and 2-C-methyl-D-erythritol 4-phosphate (MEP). The polypeptide is 2-C-methyl-D-erythritol 4-phosphate cytidylyltransferase (Shouchella clausii (strain KSM-K16) (Alkalihalobacillus clausii)).